The primary structure comprises 447 residues: Eukaryotic translation initiation factor 3 subunit E (447 aa).

One can recognise a PCI domain in the interval 253–421; it reads LELFFNAGYI…GTVVMNHPPS (169 aa).

It belongs to the eIF-3 subunit E family. Component of the eukaryotic translation initiation factor 3 (eIF-3) complex.

Its subcellular location is the cytoplasm. In terms of biological role, component of the eukaryotic translation initiation factor 3 (eIF-3) complex, which is involved in protein synthesis of a specialized repertoire of mRNAs and, together with other initiation factors, stimulates binding of mRNA and methionyl-tRNAi to the 40S ribosome. The eIF-3 complex specifically targets and initiates translation of a subset of mRNAs involved in cell proliferation. In Chaetomium globosum (strain ATCC 6205 / CBS 148.51 / DSM 1962 / NBRC 6347 / NRRL 1970) (Soil fungus), this protein is Eukaryotic translation initiation factor 3 subunit E.